We begin with the raw amino-acid sequence, 394 residues long: 8-amino-7-oxononanoate synthase (394 aa).

R21 serves as a coordination point for substrate. 112-113 lines the pyridoxal 5'-phosphate pocket; sequence GY. Substrate is bound at residue H137. Pyridoxal 5'-phosphate is bound by residues S183, H211, and T239. An N6-(pyridoxal phosphate)lysine modification is found at K242. Position 358 (T358) interacts with substrate.

This sequence belongs to the class-II pyridoxal-phosphate-dependent aminotransferase family. BioF subfamily. Homodimer. Pyridoxal 5'-phosphate serves as cofactor.

The enzyme catalyses 6-carboxyhexanoyl-[ACP] + L-alanine + H(+) = (8S)-8-amino-7-oxononanoate + holo-[ACP] + CO2. It functions in the pathway cofactor biosynthesis; biotin biosynthesis. Its function is as follows. Catalyzes the decarboxylative condensation of pimeloyl-[acyl-carrier protein] and L-alanine to produce 8-amino-7-oxononanoate (AON), [acyl-carrier protein], and carbon dioxide. In Burkholderia thailandensis (strain ATCC 700388 / DSM 13276 / CCUG 48851 / CIP 106301 / E264), this protein is 8-amino-7-oxononanoate synthase.